We begin with the raw amino-acid sequence, 238 residues long: Large ribosomal subunit protein uL2 (238 aa).

The segment at 199-238 is disordered; the sequence is PHGGGLHQSVSRPSTVSRNAPPGRKVGHIAARRTGRKEGA. Polar residues predominate over residues 206–216; that stretch reads QSVSRPSTVSR. Residues 223–238 show a composition bias toward basic residues; it reads KVGHIAARRTGRKEGA.

It belongs to the universal ribosomal protein uL2 family. Part of the 50S ribosomal subunit. Forms a bridge to the 30S subunit in the 70S ribosome.

One of the primary rRNA binding proteins. Required for association of the 30S and 50S subunits to form the 70S ribosome, for tRNA binding and peptide bond formation. It has been suggested to have peptidyltransferase activity; this is somewhat controversial. Makes several contacts with the 16S rRNA in the 70S ribosome. This Sulfurisphaera tokodaii (strain DSM 16993 / JCM 10545 / NBRC 100140 / 7) (Sulfolobus tokodaii) protein is Large ribosomal subunit protein uL2.